The following is a 384-amino-acid chain: 8-amino-7-oxononanoate synthase (384 aa).

Arg21 serves as a coordination point for substrate. Residue 108–109 coordinates pyridoxal 5'-phosphate; that stretch reads GF. Position 133 (His133) interacts with substrate. Residues Ser179, His207, and Thr233 each coordinate pyridoxal 5'-phosphate. The residue at position 236 (Lys236) is an N6-(pyridoxal phosphate)lysine. Residue Thr352 participates in substrate binding.

It belongs to the class-II pyridoxal-phosphate-dependent aminotransferase family. BioF subfamily. As to quaternary structure, homodimer. It depends on pyridoxal 5'-phosphate as a cofactor.

The catalysed reaction is 6-carboxyhexanoyl-[ACP] + L-alanine + H(+) = (8S)-8-amino-7-oxononanoate + holo-[ACP] + CO2. It functions in the pathway cofactor biosynthesis; biotin biosynthesis. Catalyzes the decarboxylative condensation of pimeloyl-[acyl-carrier protein] and L-alanine to produce 8-amino-7-oxononanoate (AON), [acyl-carrier protein], and carbon dioxide. The chain is 8-amino-7-oxononanoate synthase from Shigella dysenteriae serotype 1 (strain Sd197).